Here is a 450-residue protein sequence, read N- to C-terminus: Beta-glucosidase (450 aa).

Glutamate 166 acts as the Proton donor in catalysis. Residue glutamate 355 is the Nucleophile of the active site.

This sequence belongs to the glycosyl hydrolase 1 family.

It carries out the reaction Hydrolysis of terminal, non-reducing beta-D-glucosyl residues with release of beta-D-glucose.. This chain is Beta-glucosidase (bglA), found in Niallia circulans (Bacillus circulans).